The chain runs to 66 residues: U8-myrmicitoxin-Tb1a (66 aa).

The signal sequence occupies residues 1–26; it reads MKLSFLSLAFAVIFVMAIMYAPQVEA. Residues 27-50 constitute a propeptide that is removed on maturation; it reads KASADADADADAAASADALAKASA.

In terms of tissue distribution, expressed by the venom gland.

Its subcellular location is the secreted. Functionally, in vivo, this neurotoxin paralyzes about 50% of blowflies (L.caesar) one hour after intrathoracic injection, when tested at high doses (54 nmol/g). This Tetramorium bicarinatum (Tramp ant) protein is U8-myrmicitoxin-Tb1a.